Reading from the N-terminus, the 110-residue chain is ATP-dependent Clp protease adapter protein ClpS (110 aa).

The protein belongs to the ClpS family. In terms of assembly, binds to the N-terminal domain of the chaperone ClpA.

Functionally, involved in the modulation of the specificity of the ClpAP-mediated ATP-dependent protein degradation. The protein is ATP-dependent Clp protease adapter protein ClpS of Bartonella henselae (strain ATCC 49882 / DSM 28221 / CCUG 30454 / Houston 1) (Rochalimaea henselae).